The primary structure comprises 115 residues: U3-lycotoxin-Ls1k (115 aa).

The signal sequence occupies residues 1–20 (MKFVLLFGVLLVTLFSYSSA). The propeptide occupies 21–44 (EMLDDFDQADEDELLSLIEKEEAR). 4 disulfide bridges follow: cysteine 48/cysteine 63, cysteine 55/cysteine 72, cysteine 62/cysteine 87, and cysteine 74/cysteine 85.

It belongs to the neurotoxin 19 (CSTX) family. 01 subfamily. As to expression, expressed by the venom gland.

The protein resides in the secreted. The polypeptide is U3-lycotoxin-Ls1k (Lycosa singoriensis (Wolf spider)).